We begin with the raw amino-acid sequence, 603 residues long: Polypeptide N-acetylgalactosaminyltransferase 10 (603 aa).

Over 1–11 the chain is Cytoplasmic; sequence MRRKEKRLLQA. The chain crosses the membrane as a helical; Signal-anchor for type II membrane protein span at residues 12 to 31; sequence VALALAALVLLPNVGLWALY. At 32–603 the chain is on the lumenal side; the sequence is RERQPDGSPG…STVLENFNKN (572 aa). Asparagine 124 and asparagine 146 each carry an N-linked (GlcNAc...) asparagine glycan. Disulfide bonds link cysteine 135/cysteine 365, cysteine 356/cysteine 432, cysteine 471/cysteine 488, cysteine 523/cysteine 538, and cysteine 563/cysteine 578. The catalytic subdomain A stretch occupies residues 144 to 253; that stretch reads LPNTSIIIPF…VNWLPPLLDR (110 aa). Substrate-binding residues include aspartate 185 and arginine 214. Residue aspartate 237 coordinates Mn(2+). Serine 238 contributes to the substrate binding site. Histidine 239 provides a ligand contact to Mn(2+). A catalytic subdomain B region spans residues 311-373; the sequence is PFESPVMAGG…PCSRVGHIYR (63 aa). Tryptophan 342 contacts substrate. Position 370 (histidine 370) interacts with Mn(2+). 2 residues coordinate substrate: arginine 373 and tyrosine 378. The segment at 373–384 is flexible loop; it reads RKYVPYKVPAGV. The Ricin B-type lectin domain maps to 458 to 590; that stretch reads AAWGEIRNVG…SSLTQQWLFE (133 aa). Residue asparagine 593 is glycosylated (N-linked (GlcNAc...) asparagine).

It belongs to the glycosyltransferase 2 family. GalNAc-T subfamily. Mn(2+) serves as cofactor. In terms of tissue distribution, expressed at higher level than GALNT9. In the developing hindbrain region of 14.5 dpc embryos it accumulates in the rapidly dividing, undifferentiated ventricular zone adjacent to the pons. It also accumulates in the regions immediately rostral and caudal to the dorsal rhombic lips differentiating into the cerebellum. Not expressed in the developing choroid plexus.

It localises to the golgi apparatus membrane. It catalyses the reaction L-seryl-[protein] + UDP-N-acetyl-alpha-D-galactosamine = a 3-O-[N-acetyl-alpha-D-galactosaminyl]-L-seryl-[protein] + UDP + H(+). It carries out the reaction L-threonyl-[protein] + UDP-N-acetyl-alpha-D-galactosamine = a 3-O-[N-acetyl-alpha-D-galactosaminyl]-L-threonyl-[protein] + UDP + H(+). It functions in the pathway protein modification; protein glycosylation. In terms of biological role, catalyzes the initial reaction in O-linked oligosaccharide biosynthesis, the transfer of an N-acetyl-D-galactosamine residue to a serine or threonine residue on the protein receptor. Has activity toward Muc5Ac and EA2 peptide substrates. The chain is Polypeptide N-acetylgalactosaminyltransferase 10 (Galnt10) from Mus musculus (Mouse).